A 250-amino-acid polypeptide reads, in one-letter code: 3-deoxy-manno-octulosonate cytidylyltransferase (250 aa).

The protein belongs to the KdsB family.

Its subcellular location is the cytoplasm. The catalysed reaction is 3-deoxy-alpha-D-manno-oct-2-ulosonate + CTP = CMP-3-deoxy-beta-D-manno-octulosonate + diphosphate. Its pathway is nucleotide-sugar biosynthesis; CMP-3-deoxy-D-manno-octulosonate biosynthesis; CMP-3-deoxy-D-manno-octulosonate from 3-deoxy-D-manno-octulosonate and CTP: step 1/1. It participates in bacterial outer membrane biogenesis; lipopolysaccharide biosynthesis. Functionally, activates KDO (a required 8-carbon sugar) for incorporation into bacterial lipopolysaccharide in Gram-negative bacteria. This Francisella tularensis subsp. holarctica (strain FTNF002-00 / FTA) protein is 3-deoxy-manno-octulosonate cytidylyltransferase.